The following is a 337-amino-acid chain: Anthranilate phosphoribosyltransferase (337 aa).

5-phospho-alpha-D-ribose 1-diphosphate is bound by residues G82, 85 to 86 (GD), T90, 92 to 95 (NIST), 110 to 118 (KHGNRAMSS), and T122. Residue G82 participates in anthranilate binding. S94 is a binding site for Mg(2+). N113 contributes to the anthranilate binding site. Residue R168 coordinates anthranilate. Positions 226 and 227 each coordinate Mg(2+).

Belongs to the anthranilate phosphoribosyltransferase family. Homodimer. Mg(2+) serves as cofactor.

The catalysed reaction is N-(5-phospho-beta-D-ribosyl)anthranilate + diphosphate = 5-phospho-alpha-D-ribose 1-diphosphate + anthranilate. It functions in the pathway amino-acid biosynthesis; L-tryptophan biosynthesis; L-tryptophan from chorismate: step 2/5. Functionally, catalyzes the transfer of the phosphoribosyl group of 5-phosphorylribose-1-pyrophosphate (PRPP) to anthranilate to yield N-(5'-phosphoribosyl)-anthranilate (PRA). This chain is Anthranilate phosphoribosyltransferase, found in Phenylobacterium zucineum (strain HLK1).